A 600-amino-acid chain; its full sequence is MVSFTLRAIGACLIGLPALITAAPTSHVSNDFHVVEQLNGVPQGWVQEGSPAPSTQMKFKLALVQGKTAEFEQRVMDISNPKHADYGKFMSREELDAFLQPSSQVKDSVFNWLASEGISKRSVKANTDWLTFTTSIATAEKLFNTRFYTFKNTADGSQIIRTLKYSVAASAAPYVQMVQPTTKFSAPRPELSSVFTSDLEITSSANVDCNVTITPDCIRELYKMGNTFAKKDPRNRLGISGYLEQYARLDDFSTFIDMFVPSLKGTTFDFKSIEGAKNEQNSSLDSVEASLDVDYAIGLSGALSTYYGTAGRGKLIPDLDQPNITENNNEPYIEQLFYLLDLPDSELPAVLSTSYGENEQSVPPTYSSVVCSLFGRLGARGVSVIFSSGDTGVGSACQSNDGKNTTKFNPIFPAACPFVTSVGGTRQINPEVAIHFSSGGFSERFARPWYQELDVRHYLGHELEKGKWDGMYNPYGRGFPDVAAQSYKFATRDHGKTIGVSGTSASAPLFAGVVSILNSIRLAHNKPRMGFLNPWLYTIGRSGFTDIVHGGSDGCTGTDMYSHLPTPYVPGASWNATKGWDPVTGLGTPNFEKLSKLVLI.

Positions 1–22 (MVSFTLRAIGACLIGLPALITA) are cleaved as a signal peptide. A propeptide spans 23–202 (APTSHVSNDF…SVFTSDLEIT (180 aa)) (removed in mature form). Asparagine 210 and asparagine 281 each carry an N-linked (GlcNAc...) asparagine glycan. The region spanning 212–600 (TITPDCIREL…FEKLSKLVLI (389 aa)) is the Peptidase S53 domain. Residues glutamate 288 and aspartate 292 each act as charge relay system in the active site. N-linked (GlcNAc...) asparagine glycans are attached at residues asparagine 323 and asparagine 404. Residue serine 504 is the Charge relay system of the active site. Ca(2+) contacts are provided by aspartate 546 and isoleucine 547. Asparagine 575 carries an N-linked (GlcNAc...) asparagine glycan. Ca(2+) is bound by residues glycine 579 and aspartate 581.

Requires Ca(2+) as cofactor.

It is found in the secreted. It localises to the extracellular space. The enzyme catalyses Release of an N-terminal tripeptide from a polypeptide.. Functionally, secreted tripeptidyl-peptidase which degrades proteins at acidic pHs and is involved in virulence. The sequence is that of Probable tripeptidyl-peptidase SED4 (SED4) from Arthroderma benhamiae (strain ATCC MYA-4681 / CBS 112371) (Trichophyton mentagrophytes).